The sequence spans 387 residues: Alpha-2B adrenergic receptor (387 aa).

The helical transmembrane segment at 1 to 25 (AIAAVITFLILFTIFGNALVILAVL) threads the bilayer. Residues 26 to 36 (TSRSLRAPQNL) are Cytoplasmic-facing. A helical transmembrane segment spans residues 37 to 62 (FLVSLAAADILVATLIIPFSLANELL). Residues 63 to 72 (GYWYFRHTWC) are Extracellular-facing. Cys72 and Cys151 are oxidised to a cystine. The helical transmembrane segment at 73 to 95 (XVYLALDVLFCTSSIVHLCAISL) threads the bilayer. At 96–117 (DRYWAVSRALEYNSKRTPRRIK) the chain is on the cytoplasmic side. The chain crosses the membrane as a helical span at residues 118 to 140 (CIILTVWLIAAAISLPPLIYKGD). Residues 141-156 (QDPQPRGRPQCKLNQE) lie on the Extracellular side of the membrane. The helical transmembrane segment at 157–180 (AWYILSSSIGSFFVPCLIMILVYL) threads the bilayer. At 181 to 351 (RIYLIAKRSS…LTREKRFTFV (171 aa)) the chain is on the cytoplasmic side. The disordered stretch occupies residues 193–303 (RKPRAKGXPR…VPASPALACS (111 aa)). Acidic residues predominate over residues 279 to 290 (PEEEAEEEEECG). Residues 352-375 (LAVVIGVFVLCWFPFFFSYSLGAI) traverse the membrane as a helical segment. Over 376-384 (CPQHCKVPH) the chain is Extracellular. Residues 385–387 (GLF) form a helical membrane-spanning segment.

Belongs to the G-protein coupled receptor 1 family. Adrenergic receptor subfamily. ADRA2B sub-subfamily. In terms of assembly, interacts with RAB26. Interacts with PPP1R9B. Interacts with GGA1, GGA2 and GGA3.

The protein resides in the cell membrane. Functionally, alpha-2 adrenergic receptors mediate the catecholamine-induced inhibition of adenylate cyclase through the action of G proteins. This is Alpha-2B adrenergic receptor (ADRA2B) from Macroscelides proboscideus (Short-eared elephant shrew).